A 370-amino-acid polypeptide reads, in one-letter code: ATP synthase gamma chain, chloroplastic (370 aa).

A chloroplast-targeting transit peptide spans 1–54 (MRSFCIAALLAVASAFTTQPTSFTVKTANVGERASGVFPEQSSAHRTRKATIVM). Residue C145 is part of the active site.

It belongs to the ATPase gamma chain family. F-type ATPases have 2 components, CF(1) - the catalytic core - and CF(0) - the membrane proton channel. CF(1) has five subunits: alpha(3), beta(3), gamma(1), delta(1), epsilon(1). CF(0) has four main subunits: a, b, b' and c.

The protein resides in the plastid. The protein localises to the chloroplast thylakoid membrane. Produces ATP from ADP in the presence of a proton gradient across the membrane. The gamma chain is believed to be important in regulating ATPase activity and the flow of protons through the CF(0) complex. The sequence is that of ATP synthase gamma chain, chloroplastic (ATPC) from Phaeodactylum tricornutum (Diatom).